Here is a 204-residue protein sequence, read N- to C-terminus: Molybdenum cofactor guanylyltransferase (204 aa).

Residues 12 to 14 (LAG), lysine 25, asparagine 53, aspartate 71, and aspartate 101 each bind GTP. Aspartate 101 contributes to the Mg(2+) binding site.

Belongs to the MobA family. Monomer. Requires Mg(2+) as cofactor.

It localises to the cytoplasm. The catalysed reaction is Mo-molybdopterin + GTP + H(+) = Mo-molybdopterin guanine dinucleotide + diphosphate. Its function is as follows. Transfers a GMP moiety from GTP to Mo-molybdopterin (Mo-MPT) cofactor (Moco or molybdenum cofactor) to form Mo-molybdopterin guanine dinucleotide (Mo-MGD) cofactor. In Ralstonia nicotianae (strain ATCC BAA-1114 / GMI1000) (Ralstonia solanacearum), this protein is Molybdenum cofactor guanylyltransferase.